Consider the following 350-residue polypeptide: C5a anaphylatoxin chemotactic receptor 1 (350 aa).

Residues 1-37 (MDDMCSILTEEELSLYNITDCEFVKPGGLGPVLGPRH) lie on the Extracellular side of the membrane. Residue N17 is glycosylated (N-linked (GlcNAc...) asparagine). Residues 38–64 (LSALVFYGLVFLLGVPGNALVVWVTGF) form a helical membrane-spanning segment. Residues 65–69 (RMPRS) are Cytoplasmic-facing. A helical transmembrane segment spans residues 70 to 93 (VTSLWFLNLALADLLCCLSLPLLM). Topologically, residues 94 to 110 (VPLAMDQHWPFGPVACK) are extracellular. Residues C109 and C187 are joined by a disulfide bond. The chain crosses the membrane as a helical span at residues 111–132 (LLKGLLYLIMFCSVLLLVLISL). Topologically, residues 133-154 (DRFLLVSWPVWCQNWRRPRKAG) are cytoplasmic. Residues 155–174 (WVCVGVWLLALLGSIPQFVY) traverse the membrane as a helical segment. Residues 175–197 (VKEVQLSTSKSECLGLYTVASAW) lie on the Extracellular side of the membrane. Residues 198–223 (ANTTARFLVGFVLPFITIVTCHWVVY) form a helical membrane-spanning segment. Topologically, residues 224–247 (SRARRGSGVGPGRVSEARSRRTLR) are cytoplasmic. Residues 248–270 (VIVAVSLSFFLCWFPLHILDFLV) form a helical membrane-spanning segment. Topologically, residues 271–287 (LSTPRHSSHSANIQLAH) are extracellular. A helical transmembrane segment spans residues 288 to 308 (TLALCLAYCNSCLNPLLYVCL). Over 309–350 (GRGFKQNINRSLRNMFNFATEESVTRQSMFKSTSERTQEMNM) the chain is Cytoplasmic.

The protein belongs to the G-protein coupled receptor 1 family. High expression in head, kidney and posterior kidney, lower levels in peripheral blood leukocytes and spleen, low expression in brain and gills, heart, intestine and very low expression in liver and muscle.

It is found in the cell membrane. Functionally, receptor for the chemotactic and inflammatory peptide anaphylatoxin C5a. This receptor stimulates chemotaxis, granule enzyme release and superoxide anion production. This is C5a anaphylatoxin chemotactic receptor 1 (c5ar1) from Oncorhynchus mykiss (Rainbow trout).